Reading from the N-terminus, the 198-residue chain is Recombination protein RecR (198 aa).

The segment at 57-72 (CSVCGHITDTDPCYIC) adopts a C4-type zinc-finger fold. Positions 80–175 (SMICVVEETK…KVTRLAHGLP (96 aa)) constitute a Toprim domain.

Belongs to the RecR family.

May play a role in DNA repair. It seems to be involved in an RecBC-independent recombinational process of DNA repair. It may act with RecF and RecO. This chain is Recombination protein RecR, found in Macrococcus caseolyticus (strain JCSC5402) (Macrococcoides caseolyticum).